Consider the following 235-residue polypeptide: Elongation factor Tu, chloroplastic (235 aa).

The tr-type G domain maps to Lys1 to Thr125. GTP is bound at residue Asn47–Asp50.

The protein belongs to the TRAFAC class translation factor GTPase superfamily. Classic translation factor GTPase family. EF-Tu/EF-1A subfamily.

The protein resides in the plastid. It localises to the chloroplast. The catalysed reaction is GTP + H2O = GDP + phosphate + H(+). GTP hydrolase that promotes the GTP-dependent binding of aminoacyl-tRNA to the A-site of ribosomes during protein biosynthesis. This is Elongation factor Tu, chloroplastic (tufA) from Bryopsis plumosa (Green alga).